A 231-amino-acid polypeptide reads, in one-letter code: Large ribosomal subunit protein uL1 (231 aa).

The protein belongs to the universal ribosomal protein uL1 family. In terms of assembly, part of the 50S ribosomal subunit.

Its function is as follows. Binds directly to 23S rRNA. The L1 stalk is quite mobile in the ribosome, and is involved in E site tRNA release. Functionally, protein L1 is also a translational repressor protein, it controls the translation of the L11 operon by binding to its mRNA. In Pseudomonas savastanoi pv. phaseolicola (strain 1448A / Race 6) (Pseudomonas syringae pv. phaseolicola (strain 1448A / Race 6)), this protein is Large ribosomal subunit protein uL1.